A 237-amino-acid polypeptide reads, in one-letter code: UPF0173 metal-dependent hydrolase HQ_3368A (237 aa).

Belongs to the UPF0173 family.

The protein is UPF0173 metal-dependent hydrolase HQ_3368A of Haloquadratum walsbyi (strain DSM 16790 / HBSQ001).